The sequence spans 290 residues: uncharacterized protein (290 aa).

Belongs to the UreD family.

The protein localises to the cytoplasm. It is found in the nucleus. Functionally, probably facilitates nickel incorporation. This is an uncharacterized protein from Schizosaccharomyces pombe (strain 972 / ATCC 24843) (Fission yeast).